Consider the following 155-residue polypeptide: Small ribosomal subunit protein uS7c (155 aa).

Belongs to the universal ribosomal protein uS7 family. As to quaternary structure, part of the 30S ribosomal subunit.

The protein localises to the plastid. It is found in the chloroplast. One of the primary rRNA binding proteins, it binds directly to 16S rRNA where it nucleates assembly of the head domain of the 30S subunit. The sequence is that of Small ribosomal subunit protein uS7c (rps7) from Dioscorea bulbifera (Air potato).